Consider the following 371-residue polypeptide: Ferrochelatase (371 aa).

Residues His-218 and Glu-299 each contribute to the Fe cation site.

This sequence belongs to the ferrochelatase family.

It is found in the cytoplasm. The enzyme catalyses heme b + 2 H(+) = protoporphyrin IX + Fe(2+). It functions in the pathway porphyrin-containing compound metabolism; protoheme biosynthesis; protoheme from protoporphyrin-IX: step 1/1. Functionally, catalyzes the ferrous insertion into protoporphyrin IX. This is Ferrochelatase from Ralstonia pickettii (strain 12J).